A 387-amino-acid polypeptide reads, in one-letter code: Sialic acid-binding Ig-like lectin 13 (387 aa).

A signal peptide spans 1–15 (MLPLLLPLLWAGALA). The Ig-like V-type domain occupies 16-138 (LEGIFQLEVP…KDPPLSVHVT (123 aa)). Topologically, residues 16–341 (LEGIFQLEVP…QRKSGPMAEV (326 aa)) are extracellular. Disulfide bonds link Cys35/Cys168, Cys40/Cys100, and Cys162/Cys211. Asn99 carries N-linked (GlcNAc...) asparagine glycosylation. Residue Arg118 participates in N-acetylneuraminate binding. The Ig-like C2-type 1 domain occupies 144-227 (PDILIPGALK…AGVTTTRTVR (84 aa)). N-linked (GlcNAc...) asparagine glycans are attached at residues Asn229, Asn236, and Asn254. One can recognise an Ig-like C2-type 2 domain in the interval 234-326 (PQNLTLTVFQ…RNPLGSQQVS (93 aa)). Cys270 and Cys314 form a disulfide bridge. The chain crosses the membrane as a helical span at residues 342 to 362 (VLVAIGEAAVKILLLFLCLII). Residues 363-387 (LRVKSHRRKAAKAATGVEAAKVVKG) lie on the Cytoplasmic side of the membrane.

The protein belongs to the immunoglobulin superfamily. SIGLEC (sialic acid binding Ig-like lectin) family.

It localises to the membrane. Its function is as follows. Putative adhesion molecule that mediates sialic-acid dependent binding to cells. This Pan troglodytes (Chimpanzee) protein is Sialic acid-binding Ig-like lectin 13 (SIGLEC13).